A 236-amino-acid chain; its full sequence is Pyridoxal 5'-phosphate synthase subunit PdxT (236 aa).

61 to 63 (GES) is a binding site for L-glutamine. Residue cysteine 93 is the Nucleophile of the active site. Residues arginine 127 and 163–164 (IR) each bind L-glutamine. Residues histidine 215 and glutamate 217 each act as charge relay system in the active site.

It belongs to the glutaminase PdxT/SNO family. In the presence of PdxS, forms a dodecamer of heterodimers. Only shows activity in the heterodimer.

It catalyses the reaction aldehydo-D-ribose 5-phosphate + D-glyceraldehyde 3-phosphate + L-glutamine = pyridoxal 5'-phosphate + L-glutamate + phosphate + 3 H2O + H(+). It carries out the reaction L-glutamine + H2O = L-glutamate + NH4(+). The protein operates within cofactor biosynthesis; pyridoxal 5'-phosphate biosynthesis. In terms of biological role, catalyzes the hydrolysis of glutamine to glutamate and ammonia as part of the biosynthesis of pyridoxal 5'-phosphate. The resulting ammonia molecule is channeled to the active site of PdxS. The protein is Pyridoxal 5'-phosphate synthase subunit PdxT of Pseudarthrobacter chlorophenolicus (strain ATCC 700700 / DSM 12829 / CIP 107037 / JCM 12360 / KCTC 9906 / NCIMB 13794 / A6) (Arthrobacter chlorophenolicus).